The primary structure comprises 933 residues: Exosome complex exonuclease RRP44 homolog A (933 aa).

The 114-residue stretch at 50-163 (KIIVVDTNVV…LVTNDRENKR (114 aa)) folds into the PINc domain. Residues 217–321 (QEHKPMSEIT…NVDDAPRTSN (105 aa)) form the CSD1 domain. Residues 296 to 336 (AEEDDEEDDTVHLAPDNVDDAPRTSNLSHETSGDKNAAPVR) are disordered. A CSD2 domain is found at 371 to 438 (ALFVSKDRRI…ETEVVLIEND (68 aa)). In terms of domain architecture, RNB spans 469–798 (RQDLRHLLVF…FVHRLLAASL (330 aa)). The Mg(2+) site is built by Asp481 and Asp490.

The protein belongs to the RNR ribonuclease family. Probable component of the RNA exosome complex. It depends on Mg(2+) as a cofactor.

The protein localises to the nucleus. Functionally, catalytic component of the RNA exosome complex which has 3'-&gt;5' exoribonuclease activity and participates in a multitude of cellular RNA processing and degradation events. Required for 5.8S rRNA intermediate processing and the degradation of 5' external transcribed spacer (5' ETS), a maturation by-product of rRNA synthesis. Is not involved in the degradation of turnip crinkle virus (TCV) RNA and significant virus resistance. Required for normal development of female gametophytes and early embryogenesis. This Arabidopsis thaliana (Mouse-ear cress) protein is Exosome complex exonuclease RRP44 homolog A.